The primary structure comprises 510 residues: MKKVIIRKTEEIENWKRNINNEINFIPTMGNLHNGHIKLISTAKNDNSNVNLVSIFINPLQFDNKLDLENYPKTIDNDIKISFSNGADAIFIPSNEDIYPPNNKNIKFLKAPIELSSALCGLNRIGHFDGVCTVVYRLLNLIKPKNLYLGEKDWQQLLILKNLVLKEKLNVAIKSIPTQRDFDGIPLSSRNVHLSKNERKLIRFFSSELLEAKKNFQQEKNINLNEIIKKLSAKKISIEYLEHLHPHTLQKARLEDNISLLAGAIRCGETRLIDHVFLMKRRPIIAIDGPAGSGKSTVTKLIAKKLKLLYLDTGAMYRALSWLLLKENIDYKKEKKLLNIFKDISIVFKSNTNSHQDVYVNNCCVTEEIRSQKISSIVSKISSIKEVRKFLVEEQRKIGESGGLVAEGRDIGTTVFPNAELKIFLTASIDERAKRRKSDKQSKDSQEIDLDTLKELIEKRDFEDSNREISPLIKANDAIEIISDGYTINEVVDKIIDLYNDKIPKETEIK.

A pantoate--beta-alanine ligase region spans residues Met1 to Val276. Residue Met29–His36 coordinates ATP. Catalysis depends on His36, which acts as the Proton donor. (R)-pantoate is bound at residue Gln61. Gln61 provides a ligand contact to beta-alanine. Gly150–Asp153 is an ATP binding site. Gln156 serves as a coordination point for (R)-pantoate. An ATP-binding site is contributed by Leu187–Arg190. Positions Phe277–Lys510 are cytidylate kinase.

In the N-terminal section; belongs to the pantothenate synthetase family. It in the C-terminal section; belongs to the cytidylate kinase family. Type 1 subfamily.

Its subcellular location is the cytoplasm. The enzyme catalyses (R)-pantoate + beta-alanine + ATP = (R)-pantothenate + AMP + diphosphate + H(+). It catalyses the reaction CMP + ATP = CDP + ADP. It carries out the reaction dCMP + ATP = dCDP + ADP. The protein operates within cofactor biosynthesis; (R)-pantothenate biosynthesis; (R)-pantothenate from (R)-pantoate and beta-alanine: step 1/1. In terms of biological role, catalyzes the condensation of pantoate with beta-alanine in an ATP-dependent reaction via a pantoyl-adenylate intermediate. Functionally, catalyzes the transfer of a phosphate group from ATP to either CMP or dCMP to form CDP or dCDP and ADP, respectively. In Prochlorococcus marinus (strain MIT 9215), this protein is Bifunctional pantoate ligase/cytidylate kinase.